Reading from the N-terminus, the 1064-residue chain is Lysine-specific demethylase 4A (1064 aa).

Residue Ala-2 is modified to N-acetylalanine. The region spanning 14–56 (IMTFYPTMEEFRNFSRYIAYIESQGAHRAGLAKVVPPKEWKPR) is the JmjN domain. 2-oxoglutarate is bound at residue Tyr-132. Residues 142–308 (EKHVDEWNIG…YGKQAVLCSC (167 aa)) form the JmjC domain. His-188 and Glu-190 together coordinate Fe cation. 2-oxoglutarate is bound by residues Asn-198 and Lys-206. 2 residues coordinate Zn(2+): Cys-234 and His-240. Lys-241 lines the 2-oxoglutarate pocket. Residue His-276 coordinates Fe cation. Cys-306 and Cys-308 together coordinate Zn(2+). Residues 358-384 (ELPPRAGNEEECPEEDMEGVEDGEEGD) form a disordered region. Acidic residues predominate over residues 366 to 382 (EEECPEEDMEGVEDGEE). Lys-471 participates in a covalent cross-link: (Microbial infection) Glycyl lysine isopeptide (Lys-Gly) (interchain with G-Cter in SUMO). Disordered regions lie at residues 501-537 (FSGS…RAQG) and 616-641 (SDDE…KPLS). Low complexity predominate over residues 509–532 (SSSLGSGSSRDSISSDSETSEPLS). At Ser-523 the chain carries Phosphoserine. Positions 597-638 (RQPLSKLPRHHPLVLQECVSDDETSEQLTPEEEAEETEAWAK) are interaction with NCOR1. The span at 616–634 (SDDETSEQLTPEEEAEETE) shows a compositional bias: acidic residues. The PHD-type 1 zinc-finger motif lies at 709-767 (MCFTSTGCSTDINLSTPYLEEDGTSILVSCKKCSVRVHASCYGVPPAKASEDWMCSRCS). The segment at 772–805 (EEDCCLCSLRGGALQRANDDRWVHVSCAVAILEA) adopts a C2HC pre-PHD-type zinc-finger fold. A PHD-type 2 zinc finger spans residues 828 to 885 (LKCIFCKKRRKRTAGCCVQCSHGRCPTAFHVSCAQAAGVMMQPDDWPFVVFITCFRHK). Tudor domains are found at residues 897–954 (QSIT…CLQF) and 955–1011 (GPPA…EELP).

It belongs to the JHDM3 histone demethylase family. Interacts with histone deacetylase proteins HDAC1, HDAC2 and HDAC3. Interacts with RB and NCOR1. Interacts with VRK1. Interacts with FBXO22; this interaction promotes KDM4A ubiquitination. In terms of assembly, (Microbial infection) Interacts with HTLV-1 Tax protein. Requires Fe(2+) as cofactor. In terms of processing, (Microbial infection) SUMOylated by human herpesvirus 8 E3 SUMO-protein ligase K-bZIP/K8 at Lys-471; thereby modulating the chromatin binding and histone demethylase activity of KDM4A. Post-translationally, ubiquitinated by RNF8 and RNF168 following DNA damage, leading to its degradation. Degradation promotes accessibility of H4K20me2 mark for DNA repair protein TP53BP1, which is then recruited. Also ubiquitinated by the SCF(FBXO22) complex; leading to proteasomal degradation. Ubiquitous.

It is found in the nucleus. The enzyme catalyses N(6),N(6),N(6)-trimethyl-L-lysyl(9)-[histone H3] + 2 2-oxoglutarate + 2 O2 = N(6)-methyl-L-lysyl(9)-[histone H3] + 2 formaldehyde + 2 succinate + 2 CO2. It carries out the reaction N(6),N(6),N(6)-trimethyl-L-lysyl(36)-[histone H3] + 2 2-oxoglutarate + 2 O2 = N(6)-methyl-L-lysyl(36)-[histone H3] + 2 formaldehyde + 2 succinate + 2 CO2. Several specific inhibitors are being developed and tested. Its function is as follows. Histone demethylase that specifically demethylates 'Lys-9' and 'Lys-36' residues of histone H3, thereby playing a central role in histone code. Does not demethylate histone H3 'Lys-4', H3 'Lys-27' nor H4 'Lys-20'. Demethylates trimethylated H3 'Lys-9' and H3 'Lys-36' residue, while it has no activity on mono- and dimethylated residues. Demethylation of Lys residue generates formaldehyde and succinate. Participates in transcriptional repression of ASCL2 and E2F-responsive promoters via the recruitment of histone deacetylases and NCOR1, respectively. Functionally, crucial for muscle differentiation, promotes transcriptional activation of the Myog gene by directing the removal of repressive chromatin marks at its promoter. Lacks the N-terminal demethylase domain. This chain is Lysine-specific demethylase 4A (KDM4A), found in Homo sapiens (Human).